The following is a 460-amino-acid chain: MAPGRAVAGLLLLAAAGLGGVAEGPGLAFSEDVLSVFGANLSLSAAQLQHLLEQMGAASRVGVPEPGQLHFNQCLTAEEIFSLHGFSNATQITSSKFSVICPAVLQQLNFHPCEDRPKHKTRPSHSEVWGYGFLSVTIINLASLLGLILTPLIKKSYFPKILTFFVGLAIGTLFSNAIFQLIPEAFGFDPKVDSYVEKAVAVFGGFYLLFFFERMLKMLLKTYGQNGHTHFGNDNFGPQEKTHQPKALPAINGVTCYANPAVTEANGHIHFDNVSVVSLQDGKKEPSSCTCLKGPKLSEIGTIAWMITLCDALHNFIDGLAIGASCTLSLLQGLSTSIAILCEEFPHELGDFVILLNAGMSTRQALLFNFLSACSCYVGLAFGILVGNNFAPNIIFALAGGMFLYISLADMFPEMNDMLREKVTGRKTDFTFFMIQNAGMLTGFTAILLITLYAGEIELE.

An N-terminal signal peptide occupies residues 1 to 22 (MAPGRAVAGLLLLAAAGLGGVA). Residues 23 to 132 (EGPGLAFSED…PSHSEVWGYG (110 aa)) are Extracellular-facing. N-linked (GlcNAc...) asparagine glycosylation is found at N40 and N88. The chain crosses the membrane as a helical span at residues 133-153 (FLSVTIINLASLLGLILTPLI). The Cytoplasmic portion of the chain corresponds to 154-160 (KKSYFPK). A helical membrane pass occupies residues 161–181 (ILTFFVGLAIGTLFSNAIFQL). The Extracellular portion of the chain corresponds to 182 to 191 (IPEAFGFDPK). Residues 192-212 (VDSYVEKAVAVFGGFYLLFFF) form a helical membrane-spanning segment. At 213 to 365 (ERMLKMLLKT…LNAGMSTRQA (153 aa)) the chain is on the cytoplasmic side. An XEXPHE-motif motif is present at residues 343–348 (EEFPHE). Residues 366–386 (LLFNFLSACSCYVGLAFGILV) form a helical membrane-spanning segment. Topologically, residues 387 to 388 (GN) are extracellular. Residues 389–409 (NFAPNIIFALAGGMFLYISLA) form a helical membrane-spanning segment. Over 410–429 (DMFPEMNDMLREKVTGRKTD) the chain is Cytoplasmic. A helical membrane pass occupies residues 430–450 (FTFFMIQNAGMLTGFTAILLI). Over 451–460 (TLYAGEIELE) the chain is Extracellular.

The protein belongs to the ZIP transporter (TC 2.A.5) family. As to quaternary structure, homodimer. N-glycosylated. N-glycosylation is not required for proper iron and zinc transport. As to expression, ubiquitously expressed. Expressed in thymus, placenta, lung, liver, pancreas, salivary gland and, to a lower extent, in spleen, testis, ovary, small intestine, colon, leukocyte, heart. Highest expression is observed in pancreas. Expressed by macrophages (at protein level). Expressed by microvascular capillary endothelial cells that constitute the blood-brain barrier (at protein level).

It localises to the cell membrane. It is found in the lysosome membrane. The protein resides in the apical cell membrane. The protein localises to the basolateral cell membrane. It catalyses the reaction Zn(2+)(out) + 2 hydrogencarbonate(out) = Zn(2+)(in) + 2 hydrogencarbonate(in). The catalysed reaction is selenite(out) + Zn(2+)(out) + hydrogencarbonate(out) = selenite(in) + Zn(2+)(in) + hydrogencarbonate(in). The enzyme catalyses Mn(2+)(out) + 2 hydrogencarbonate(out) = Mn(2+)(in) + 2 hydrogencarbonate(in). It carries out the reaction Fe(2+)(out) + 2 hydrogencarbonate(out) = Fe(2+)(in) + 2 hydrogencarbonate(in). It catalyses the reaction Cd(2+)(out) + 2 hydrogencarbonate(out) = Cd(2+)(in) + 2 hydrogencarbonate(in). The catalysed reaction is Co(2+)(out) + 2 hydrogencarbonate(out) = Co(2+)(in) + 2 hydrogencarbonate(in). Electroneutral divalent metal cation:bicarbonate symporter of the plasma membrane mediating the cellular uptake of zinc and manganese, two divalent metal cations important for development, tissue homeostasis and immunity. Transports an electroneutral complex composed of a divalent metal cation and two bicarbonate anions or alternatively a bicarbonate and a selenite anion. Thereby, it also contributes to the cellular uptake of selenium, an essential trace metal and micronutrient. Also imports cadmium a non-essential metal which is cytotoxic and carcinogenic. May also transport iron and cobalt through membranes. Through zinc import, indirectly regulates the metal-dependent transcription factor MTF1 and the expression of some metalloproteases involved in cartilage catabolism and also probably heart development. Also indirectly regulates the expression of proteins involved in cell morphology and cytoskeleton organization. Indirectly controls innate immune function and inflammatory response by regulating zinc cellular uptake which in turn modulates the expression of genes specific of these processes. Protects, for instance, cells from injury and death at the onset of inflammation. By regulating zinc influx into monocytes also directly modulates their adhesion to endothelial cells and arteries. Reclaims manganese from the bile at the apical membrane of hepatocytes, thereby regulating the activity of the manganese-dependent enzymes through the systemic levels of the nutrient. Also participates in manganese reabsorption in the proximal tubule of the kidney. By mediating the extracellular uptake of manganese by cells of the blood-brain barrier, may also play a role in the transport of the micronutrient to the brain. With manganese cellular uptake also participates in mitochondrial proper function. Finally, also probably functions intracellularly, translocating zinc from lysosome to cytosol to indirectly enhance the expression of specific genes during TCR-mediated T cell activation. The sequence is that of Metal cation symporter ZIP8 from Homo sapiens (Human).